A 416-amino-acid chain; its full sequence is 26S proteasome regulatory subunit 8 (416 aa).

A compositionally biased stretch (low complexity) spans 1–18 (MAPPASTASSADPSKPTA). Residues 1–29 (MAPPASTASSADPSKPTAQKLTEESDEKT) form a disordered region. An ATP-binding site is contributed by 200–207 (GPPGTGKT).

It belongs to the AAA ATPase family. In terms of assembly, component of the 19S proteasome regulatory particle complex. The 26S proteasome consists of a 20S core particle (CP) and two 19S regulatory subunits (RP). Interacts with elt-2.

It localises to the cytoplasm. The protein localises to the nucleus. Component of the 26S proteasome, a multiprotein complex involved in the ATP-dependent degradation of ubiquitinated proteins. This complex plays a key role in the maintenance of protein homeostasis by removing misfolded or damaged proteins, which could impair cellular functions, and by removing proteins whose functions are no longer required. Therefore, the proteasome participates in numerous cellular processes, including cell cycle progression, apoptosis, or DNA damage repair. Belongs to the heterohexameric ring of AAA (ATPases associated with diverse cellular activities) proteins that unfolds ubiquitinated target proteins that are concurrently translocated into a proteolytic chamber and degraded into peptides. In addition, regulates gene expression in response to bacterial infection. Binds to the GATA transcription factor elt-2 to control its transcriptional activity and thus the expression of elt-2-dependent genes in response to infection by Gram-negative bacteria such as P.aeruginosa. This is 26S proteasome regulatory subunit 8 from Caenorhabditis elegans.